An 87-amino-acid polypeptide reads, in one-letter code: Phosphoribosyl-ATP pyrophosphatase (87 aa).

Belongs to the PRA-PH family.

The protein resides in the cytoplasm. The catalysed reaction is 1-(5-phospho-beta-D-ribosyl)-ATP + H2O = 1-(5-phospho-beta-D-ribosyl)-5'-AMP + diphosphate + H(+). It functions in the pathway amino-acid biosynthesis; L-histidine biosynthesis; L-histidine from 5-phospho-alpha-D-ribose 1-diphosphate: step 2/9. The chain is Phosphoribosyl-ATP pyrophosphatase from Beutenbergia cavernae (strain ATCC BAA-8 / DSM 12333 / CCUG 43141 / JCM 11478 / NBRC 16432 / NCIMB 13614 / HKI 0122).